We begin with the raw amino-acid sequence, 463 residues long: Annexin A7 (463 aa).

Pro residues-rich tracts occupy residues 1–18 (MSYPGYPPTGYPPFPGYP) and 26–38 (FPPPGQYPYPSGF). Disordered stretches follow at residues 1–54 (MSYP…SSGY) and 71–153 (GYPG…THGT). A repeat-rich region region spans residues 1–140 (MSYPGYPPTG…QYPGGQSPYP (140 aa)). The tract at residues 5–20 (GYPPTGYPPFPGYPPT) is 3 X 5 AA tandem repeats of G-Y-P-P-X. Over residues 86–99 (GGQGFGAPPGGAGF) the composition is skewed to gly residues. Annexin repeat units lie at residues 160–231 (FDAM…ALFM), 232–303 (PSTY…SMCQ), 315–387 (QLAQ…TILQ), and 391–462 (NRPA…AIVG). Residue Lys-208 is modified to N6-acetyllysine.

It belongs to the annexin family. In terms of assembly, interacts with PDCD6.

Its function is as follows. Calcium/phospholipid-binding protein which promotes membrane fusion and is involved in exocytosis. In Bos taurus (Bovine), this protein is Annexin A7 (ANXA7).